Here is a 473-residue protein sequence, read N- to C-terminus: ATP synthase subunit beta (473 aa).

Position 158–165 (158–165) interacts with ATP; sequence GGAGVGKT.

The protein belongs to the ATPase alpha/beta chains family. As to quaternary structure, F-type ATPases have 2 components, CF(1) - the catalytic core - and CF(0) - the membrane proton channel. CF(1) has five subunits: alpha(3), beta(3), gamma(1), delta(1), epsilon(1). CF(0) has three main subunits: a(1), b(2) and c(9-12). The alpha and beta chains form an alternating ring which encloses part of the gamma chain. CF(1) is attached to CF(0) by a central stalk formed by the gamma and epsilon chains, while a peripheral stalk is formed by the delta and b chains.

The protein localises to the cell membrane. It catalyses the reaction ATP + H2O + 4 H(+)(in) = ADP + phosphate + 5 H(+)(out). Produces ATP from ADP in the presence of a proton gradient across the membrane. The catalytic sites are hosted primarily by the beta subunits. The chain is ATP synthase subunit beta from Bacillus licheniformis (strain ATCC 14580 / DSM 13 / JCM 2505 / CCUG 7422 / NBRC 12200 / NCIMB 9375 / NCTC 10341 / NRRL NRS-1264 / Gibson 46).